We begin with the raw amino-acid sequence, 103 residues long: Large ribosomal subunit protein bL21 (103 aa).

The protein belongs to the bacterial ribosomal protein bL21 family. Part of the 50S ribosomal subunit. Contacts protein L20.

Functionally, this protein binds to 23S rRNA in the presence of protein L20. The protein is Large ribosomal subunit protein bL21 of Chloroflexus aggregans (strain MD-66 / DSM 9485).